Consider the following 1031-residue polypeptide: Semaphorin-6A (1031 aa).

The signal sequence occupies residues 1-18 (MRPAALLLCLTLLHCAGA). The Extracellular segment spans residues 19-649 (GFPEDSEPIS…KSNDQLVPVT (631 aa)). A Sema domain is found at 24–512 (SEPISISHGN…FSTCVIKVPL (489 aa)). N-linked (GlcNAc...) asparagine glycosylation is found at Asn33, Asn49, and Asn65. Disulfide bonds link Cys107-Cys117, Cys135-Cys144, Cys258-Cys369, and Cys283-Cys328. A glycan (N-linked (GlcNAc...) asparagine) is linked at Asn282. Asn434 and Asn461 each carry an N-linked (GlcNAc...) asparagine glycan. Disulfide bonds link Cys477/Cys506, Cys515/Cys533, Cys521/Cys568, and Cys525/Cys542. Residues 650-670 (LLAIAVILAFVMGAVFSGIIV) traverse the membrane as a helical segment. At 671 to 1031 (YCVCDHRRKD…TSMKPNDACT (361 aa)) the chain is on the cytoplasmic side. Ser698 bears the Phosphoserine mark. 3 disordered regions span residues 754 to 777 (ALPT…SREW), 861 to 902 (SSKS…TGLS), and 914 to 1031 (GLEY…DACT). Residues 921–931 (YPTNSLTRSHQ) are compositionally biased toward polar residues. The span at 932-951 (TTTLKRNNTNSSNSSHLSRN) shows a compositional bias: low complexity. At Ser953 the chain carries Phosphoserine. Composition is skewed to polar residues over residues 971 to 998 (QVHS…SLTR) and 1019 to 1031 (PLST…DACT).

The protein belongs to the semaphorin family. As to quaternary structure, active as a homodimer or oligomer. The SEMA6A homodimer interacts with a PLXNA2 homodimer, giving rise to a heterotetramer. Interacts with EVL. In terms of tissue distribution, particularly high levels in spinal cord, cerebellum, metencephalon, superior and inferior colliculus, diencephalon, olfactory bulb and eye.

It localises to the cell membrane. In terms of biological role, cell surface receptor for PLXNA2 that plays an important role in cell-cell signaling. Required for normal granule cell migration in the developing cerebellum. Promotes reorganization of the actin cytoskeleton and plays an important role in axon guidance in the developing central nervous system. Can act as repulsive axon guidance cue. Has repulsive action towards migrating granular neurons. May play a role in channeling sympathetic axons into the sympathetic chains and controlling the temporal sequence of sympathetic target innervation. This chain is Semaphorin-6A (Sema6a), found in Mus musculus (Mouse).